A 186-amino-acid chain; its full sequence is Ribosome-recycling factor (186 aa).

This sequence belongs to the RRF family.

It localises to the cytoplasm. In terms of biological role, responsible for the release of ribosomes from messenger RNA at the termination of protein biosynthesis. May increase the efficiency of translation by recycling ribosomes from one round of translation to another. In Coprothermobacter proteolyticus (strain ATCC 35245 / DSM 5265 / OCM 4 / BT), this protein is Ribosome-recycling factor.